Here is a 425-residue protein sequence, read N- to C-terminus: Riboflavin biosynthesis protein RibBA (425 aa).

The interval 1–204 (MTRLDSVERA…IADLIEWRRK (204 aa)) is DHBP synthase. Residues 28–29 (RE), D33, 141–145 (RPGHT), and E165 each bind D-ribulose 5-phosphate. E29 contacts Mg(2+). A Mg(2+)-binding site is contributed by H144. The interval 205 to 425 (HEKHIERVAE…HLPGEFGGAL (221 aa)) is GTP cyclohydrolase II. 259–263 (RVHSE) contacts GTP. Zn(2+) contacts are provided by C264, C275, and C277. GTP contacts are provided by residues Q280, 303–305 (EGR), and T325. D337 serves as the catalytic Proton acceptor; for GTP cyclohydrolase activity. R339 serves as the catalytic Nucleophile; for GTP cyclohydrolase activity. Residues T360 and K365 each contribute to the GTP site.

It in the N-terminal section; belongs to the DHBP synthase family. This sequence in the C-terminal section; belongs to the GTP cyclohydrolase II family. Requires Mg(2+) as cofactor. Mn(2+) is required as a cofactor. Zn(2+) serves as cofactor.

The enzyme catalyses D-ribulose 5-phosphate = (2S)-2-hydroxy-3-oxobutyl phosphate + formate + H(+). The catalysed reaction is GTP + 4 H2O = 2,5-diamino-6-hydroxy-4-(5-phosphoribosylamino)-pyrimidine + formate + 2 phosphate + 3 H(+). It participates in cofactor biosynthesis; riboflavin biosynthesis; 2-hydroxy-3-oxobutyl phosphate from D-ribulose 5-phosphate: step 1/1. Its pathway is cofactor biosynthesis; riboflavin biosynthesis; 5-amino-6-(D-ribitylamino)uracil from GTP: step 1/4. Its function is as follows. Catalyzes the conversion of D-ribulose 5-phosphate to formate and 3,4-dihydroxy-2-butanone 4-phosphate. Catalyzes the conversion of GTP to 2,5-diamino-6-ribosylamino-4(3H)-pyrimidinone 5'-phosphate (DARP), formate and pyrophosphate. This Mycobacterium ulcerans (strain Agy99) protein is Riboflavin biosynthesis protein RibBA.